Consider the following 202-residue polypeptide: NADH-quinone oxidoreductase subunit C (202 aa).

Belongs to the complex I 30 kDa subunit family. NDH-1 is composed of 14 different subunits. Subunits NuoB, C, D, E, F, and G constitute the peripheral sector of the complex.

The protein localises to the cell inner membrane. It catalyses the reaction a quinone + NADH + 5 H(+)(in) = a quinol + NAD(+) + 4 H(+)(out). NDH-1 shuttles electrons from NADH, via FMN and iron-sulfur (Fe-S) centers, to quinones in the respiratory chain. The immediate electron acceptor for the enzyme in this species is believed to be ubiquinone. Couples the redox reaction to proton translocation (for every two electrons transferred, four hydrogen ions are translocated across the cytoplasmic membrane), and thus conserves the redox energy in a proton gradient. This is NADH-quinone oxidoreductase subunit C from Paracidovorax citrulli (strain AAC00-1) (Acidovorax citrulli).